Here is a 57-residue protein sequence, read N- to C-terminus: MATPKFKKSRANTHSRRSQWKADNVALQEVTIDGQTVRIPRRLVKAAKLGLVDVEQF.

Basic residues predominate over residues 1-19 (MATPKFKKSRANTHSRRSQ). Residues 1-20 (MATPKFKKSRANTHSRRSQW) are disordered.

Belongs to the bacterial ribosomal protein bL32 family.

This chain is Large ribosomal subunit protein bL32, found in Corynebacterium aurimucosum (strain ATCC 700975 / DSM 44827 / CIP 107346 / CN-1) (Corynebacterium nigricans).